The chain runs to 870 residues: Disks large homolog 2 (870 aa).

S-palmitoyl cysteine attachment occurs at residues cysteine 5 and cysteine 7. Position 28 is a phosphoserine (serine 28). A Phosphotyrosine modification is found at tyrosine 58. Serine 65 is subject to Phosphoserine. PDZ domains lie at 98-184 (EITL…VRRR) and 193-279 (EIKL…VGKP). 6 positions are modified to phosphoserine: serine 307, serine 328, serine 360, serine 365, serine 406, and serine 414. A PDZ 3 domain is found at 421-501 (KVVLHKGSTG…QTVTIIAQYQ (81 aa)). At tyrosine 505 the chain carries Phosphotyrosine. Serine 528, serine 530, serine 553, serine 627, and serine 635 each carry phosphoserine. The region spanning 536–606 (KRSLYVRAMF…PSKRRVERKE (71 aa)) is the SH3 domain. The Guanylate kinase-like domain occupies 680–855 (TRPVIILGPM…IYNQCKLVIE (176 aa)). 2 positions are modified to phosphotyrosine: tyrosine 750 and tyrosine 755.

It belongs to the MAGUK family. As to quaternary structure, interacts through its PDZ domains with NETO1. Interacts with NOS1/nNOS through second PDZ domain. Interacts with KCNJ2/Kir2.1 (via C-terminus) through one of its PDZ domains. Interacts with KCNJ4, Interacts with FRMPD4 (via C-terminus). Interacts with LRFN1, LRFN2 and LRFN4. Interacts with FASLG. Interacts with KCNJ4. Interacts with ADAM22. Interacts with DGKI (via PDZ-binding motif). In terms of processing, palmitoylation of isoform 1 is not required for targeting to postsynaptic density.

Its subcellular location is the cell membrane. It localises to the postsynaptic density. It is found in the synapse. The protein localises to the membrane. The protein resides in the cell projection. Its subcellular location is the axon. It localises to the perikaryon. Required for perception of chronic pain through NMDA receptor signaling. Regulates surface expression of NMDA receptors in dorsal horn neurons of the spinal cord. Interacts with the cytoplasmic tail of NMDA receptor subunits as well as inward rectifying potassium channels. Involved in regulation of synaptic stability at cholinergic synapses. Part of the postsynaptic protein scaffold of excitatory synapses. This Homo sapiens (Human) protein is Disks large homolog 2 (DLG2).